The following is a 237-amino-acid chain: Phosphoribosylaminoimidazole-succinocarboxamide synthase (237 aa).

The protein belongs to the SAICAR synthetase family.

The catalysed reaction is 5-amino-1-(5-phospho-D-ribosyl)imidazole-4-carboxylate + L-aspartate + ATP = (2S)-2-[5-amino-1-(5-phospho-beta-D-ribosyl)imidazole-4-carboxamido]succinate + ADP + phosphate + 2 H(+). It functions in the pathway purine metabolism; IMP biosynthesis via de novo pathway; 5-amino-1-(5-phospho-D-ribosyl)imidazole-4-carboxamide from 5-amino-1-(5-phospho-D-ribosyl)imidazole-4-carboxylate: step 1/2. This chain is Phosphoribosylaminoimidazole-succinocarboxamide synthase, found in Pseudomonas fluorescens (strain Pf0-1).